The chain runs to 90 residues: U7-theraphotoxin-Hhn1h (90 aa).

A signal peptide spans 1-19 (MKTAIFTVVLALAVFAVLS). The propeptide occupies 20 to 50 (FGWEANEKALSEEFTELIHEKEAASETEARE). 3 disulfides stabilise this stretch: C51–C65, C58–C70, and C64–C81.

Belongs to the neurotoxin 10 (Hwtx-1) family. 13 (Hntx-13) subfamily. As to expression, expressed by the venom gland.

It is found in the secreted. Functionally, ion channel inhibitor. This chain is U7-theraphotoxin-Hhn1h, found in Cyriopagopus hainanus (Chinese bird spider).